Reading from the N-terminus, the 1070-residue chain is Alpha-glucosidase (1070 aa).

The first 35 residues, 1 to 35, serve as a signal peptide directing secretion; sequence MRSIKAASLTPLLAALFTTLSSTLALPSSVWEHQL. N-linked (GlcNAc...) asparagine glycans are attached at residues Asn-48, Asn-99, Asn-144, Asn-161, Asn-208, Asn-384, Asn-458, Asn-480, and Asn-513. The active-site Nucleophile is the Asp-526. Glu-529 is an active-site residue. Residues Asn-544, Asn-566, Asn-574, Asn-578, and Asn-635 are each glycosylated (N-linked (GlcNAc...) asparagine). The active-site Proton donor is Asp-730. Residues Asn-818, Asn-885, Asn-916, Asn-983, Asn-992, Asn-996, Asn-1008, Asn-1029, Asn-1043, and Asn-1052 are each glycosylated (N-linked (GlcNAc...) asparagine).

It belongs to the glycosyl hydrolase 31 family.

It carries out the reaction Hydrolysis of terminal, non-reducing (1-&gt;4)-linked alpha-D-glucose residues with release of alpha-D-glucose.. Functionally, hydrolyzes a broad range of alpha-D-linked glucopyranosides, including maltose (alpha-1,4), sucrose (alpha-1,2), isomaltose (alpha-1,6) and turanose (alpha-1,3). This chain is Alpha-glucosidase, found in Candida tsukubaensis (Yeast).